A 124-amino-acid polypeptide reads, in one-letter code: Heat-labile enterotoxin B chain (124 aa).

The signal sequence occupies residues 1 to 21; sequence MNKVKCYVLFTALLSSLYAHG. A disulfide bridge connects residues C30 and C107.

Heterohexamer of one A chain and of five B chains.

Functionally, the biological activity of the toxin is produced by the A chain, which activates intracellular adenyl cyclase. This is Heat-labile enterotoxin B chain (eltB) from Escherichia coli.